The sequence spans 338 residues: Protein pelota homolog (338 aa).

This sequence belongs to the eukaryotic release factor 1 family. Pelota subfamily. Monomer. The cofactor is a divalent metal cation.

It is found in the cytoplasm. In terms of biological role, may function in recognizing stalled ribosomes, interact with stem-loop structures in stalled mRNA molecules, and effect endonucleolytic cleavage of the mRNA. May play a role in the release non-functional ribosomes and degradation of damaged mRNAs. Has endoribonuclease activity. The sequence is that of Protein pelota homolog from Caldivirga maquilingensis (strain ATCC 700844 / DSM 13496 / JCM 10307 / IC-167).